A 72-amino-acid chain; its full sequence is Translation initiation factor IF-1 (72 aa).

In terms of domain architecture, S1-like spans M1–R72.

Belongs to the IF-1 family. In terms of assembly, component of the 30S ribosomal translation pre-initiation complex which assembles on the 30S ribosome in the order IF-2 and IF-3, IF-1 and N-formylmethionyl-tRNA(fMet); mRNA recruitment can occur at any time during PIC assembly.

The protein localises to the cytoplasm. Functionally, one of the essential components for the initiation of protein synthesis. Stabilizes the binding of IF-2 and IF-3 on the 30S subunit to which N-formylmethionyl-tRNA(fMet) subsequently binds. Helps modulate mRNA selection, yielding the 30S pre-initiation complex (PIC). Upon addition of the 50S ribosomal subunit IF-1, IF-2 and IF-3 are released leaving the mature 70S translation initiation complex. In Treponema denticola (strain ATCC 35405 / DSM 14222 / CIP 103919 / JCM 8153 / KCTC 15104), this protein is Translation initiation factor IF-1.